We begin with the raw amino-acid sequence, 617 residues long: Autophagy-related protein 20 (617 aa).

The disordered stretch occupies residues 1–83 (MWNDEDNNPY…KRKPGGYDSR (83 aa)). Residues 20-31 (QSSSINPTSPST) show a composition bias toward low complexity. The span at 48–58 (DNEHNHGVIHD) shows a compositional bias: basic and acidic residues. The segment covering 59 to 68 (DSDDDDEDLT) has biased composition (acidic residues). A PX domain is found at 89–209 (YENPKLSILI…RFFDPNASWS (121 aa)). Residues Arg126, Ser128, Lys152, and Arg175 each coordinate a 1,2-diacyl-sn-glycero-3-phospho-(1D-myo-inositol-3-phosphate). A coiled-coil region spans residues 403-440 (QQDLTTEELSKKRALLDQLEQSEAEARRIENYLSSSQQ). Positions 434–516 (YLSSSQQISP…SGNSITNKIF (83 aa)) are disordered. The segment covering 454–463 (PPSHQRRDGS) has biased composition (basic and acidic residues). The span at 480-500 (DFSSHTPSASQGLPERSTSVP) shows a compositional bias: polar residues.

The protein belongs to the sorting nexin family. Forms a complex with SNX4/ATG24 and ATG17.

The protein resides in the endosome membrane. Its subcellular location is the preautophagosomal structure membrane. Required for cytoplasm to vacuole transport (Cvt), pexophagy and mitophagy. Also involved in endoplasmic reticulum-specific autophagic process and is essential for the survival of cells subjected to severe ER stress. Functions in protein retrieval from the endocytic pathway. Required for proper sorting of the v-SNARE protein SNC1. Autophagy is required for proper vegetative growth, asexual/sexual reproduction, and full virulence. Autophagy is particularly involved in the biosynthesis of deoxynivalenol (DON), an important virulence determinant. In Gibberella zeae (strain ATCC MYA-4620 / CBS 123657 / FGSC 9075 / NRRL 31084 / PH-1) (Wheat head blight fungus), this protein is Autophagy-related protein 20.